The chain runs to 181 residues: MIKGLQNYSQQALRTARYIGQGFMVTLDHMNRTASTIQYPYEKLIPSERFRGRIHFEFDKCIACEVCVRVCPINLPVVDWEFQKSMKKKQLKSYSIDFGVCIFCGNCVEYCPTNCLSMTEEYELSAYDRHELNYDHVALGRLPFPAAKDPMVQPVYGIGYLEKGIVERTKGSKTITTLSTN.

2 consecutive 4Fe-4S ferredoxin-type domains span residues 52–81 (GRIH…VDWE) and 92–121 (KSYS…MTEE). The [4Fe-4S] cluster site is built by Cys-61, Cys-64, Cys-67, Cys-71, Cys-101, Cys-104, Cys-107, and Cys-111.

Belongs to the complex I 23 kDa subunit family. As to quaternary structure, NDH is composed of at least 16 different subunits, 5 of which are encoded in the nucleus. [4Fe-4S] cluster serves as cofactor.

Its subcellular location is the plastid. The protein resides in the chloroplast thylakoid membrane. It catalyses the reaction a plastoquinone + NADH + (n+1) H(+)(in) = a plastoquinol + NAD(+) + n H(+)(out). The enzyme catalyses a plastoquinone + NADPH + (n+1) H(+)(in) = a plastoquinol + NADP(+) + n H(+)(out). Functionally, NDH shuttles electrons from NAD(P)H:plastoquinone, via FMN and iron-sulfur (Fe-S) centers, to quinones in the photosynthetic chain and possibly in a chloroplast respiratory chain. The immediate electron acceptor for the enzyme in this species is believed to be plastoquinone. Couples the redox reaction to proton translocation, and thus conserves the redox energy in a proton gradient. This Zygnema circumcarinatum (Green alga) protein is NAD(P)H-quinone oxidoreductase subunit I, chloroplastic.